A 143-amino-acid chain; its full sequence is Calcitonin (143 aa).

The first 25 residues, 1-25 (MGFGKSSPFLAFSILVLCQAGSLQA), serve as a signal peptide directing secretion. Positions 26–84 (TPLRSALETLPDPGALSEKEGRLLLAALVKAYVQRKTNELEQEEEQEETEDSSLDSSRA) are excised as a propeptide. Residue serine 42 is modified to Phosphoserine. The tract at residues 62 to 86 (TNELEQEEEQEETEDSSLDSSRAKR) is disordered. The segment covering 65 to 78 (LEQEEEQEETEDSS) has biased composition (acidic residues). Cysteine 87 and cysteine 93 are disulfide-bonded. Positions 112–143 (GFGPETPGKKRDIANSLEKDLSSHFGVPTDAN) are disordered. A Proline amide modification is found at proline 118. The span at 118–133 (PGKKRDIANSLEKDLS) shows a compositional bias: basic and acidic residues. The propeptide occupies 122-143 (RDIANSLEKDLSSHFGVPTDAN).

This sequence belongs to the calcitonin family.

The protein resides in the secreted. Its function is as follows. Calcitonin is a peptide hormone that causes a rapid but short-lived drop in the level of calcium and phosphate in blood by promoting the incorporation of those ions in the bones. Calcitonin function is mediated by the calcitonin receptor/CALCR and the CALCR-RAMP2 (AMYR2) receptor complex. The sequence is that of Calcitonin (CALCA) from Ovis aries (Sheep).